Here is a 157-residue protein sequence, read N- to C-terminus: SsrA-binding protein (157 aa).

The span at 135-151 (DKRETEKKRDWSREKGR) shows a compositional bias: basic and acidic residues. The disordered stretch occupies residues 135-157 (DKRETEKKRDWSREKGRLLRARG).

The protein belongs to the SmpB family.

The protein localises to the cytoplasm. Its function is as follows. Required for rescue of stalled ribosomes mediated by trans-translation. Binds to transfer-messenger RNA (tmRNA), required for stable association of tmRNA with ribosomes. tmRNA and SmpB together mimic tRNA shape, replacing the anticodon stem-loop with SmpB. tmRNA is encoded by the ssrA gene; the 2 termini fold to resemble tRNA(Ala) and it encodes a 'tag peptide', a short internal open reading frame. During trans-translation Ala-aminoacylated tmRNA acts like a tRNA, entering the A-site of stalled ribosomes, displacing the stalled mRNA. The ribosome then switches to translate the ORF on the tmRNA; the nascent peptide is terminated with the 'tag peptide' encoded by the tmRNA and targeted for degradation. The ribosome is freed to recommence translation, which seems to be the essential function of trans-translation. This Rhodopseudomonas palustris (strain BisB5) protein is SsrA-binding protein.